Here is a 308-residue protein sequence, read N- to C-terminus: Dual oxidase maturation factor 1 (308 aa).

Topologically, residues 1–21 (MQANIFPFYPQPRTSFKFDTK) are extracellular. A helical membrane pass occupies residues 22–42 (IIEIIIICIVTACTFIIILPG). At 43-49 (IRGKSRS) the chain is on the cytoplasmic side. Residues 50 to 70 (IWLFRILTSLFIGAVILAVNF) form a helical membrane-spanning segment. The Extracellular segment spans residues 71–172 (TSDWETGIVT…SPCGLFQQYC (102 aa)). N-linked (GlcNAc...) asparagine glycosylation is found at asparagine 94, asparagine 107, and asparagine 119. The chain crosses the membrane as a helical span at residues 173–195 (ISTYYSSEIMWVAFGSWILYNVL). Topologically, residues 196 to 199 (FSMP) are cytoplasmic. The helical transmembrane segment at 200 to 220 (VILYGICMMFVTAICMLVSLI) threads the bilayer. Over 221 to 247 (SFASVRQAPVCNIHFGNAVLKTHFGVS) the chain is Extracellular. The chain crosses the membrane as a helical span at residues 248–268 (YWLSLVTGLFCLIVSLVLLFL). At 269-308 (YKTQPKVIRLIFSYGEEEDLSDKSENEEEHSSALSLNEML) the chain is on the cytoplasmic side.

It belongs to the DUOXA family.

It is found in the membrane. In terms of biological role, possible role in maturation and transport from the endoplasmic reticulum to the plasma membrane of functional dual oxidase. This Xenopus tropicalis (Western clawed frog) protein is Dual oxidase maturation factor 1 (duoxa1).